A 277-amino-acid chain; its full sequence is Carbonyl reductase [NADPH] 1 (277 aa).

NADP(+)-binding positions include 10–34, 63–64, and Asn90; these read VTGANKGVGFAITRALCRLFSGDVL and DI. Position 30 is a phosphoserine (Ser30). Glutathione is bound by residues 95–97 and Gln106; that span reads FKM. Residue Ser140 participates in substrate binding. 193–194 contacts glutathione; it reads AY. Tyr194 functions as the Proton acceptor in the catalytic mechanism. Residues 194–198 and 231–233 contribute to the NADP(+) site; these read YGVTK and VRT.

This sequence belongs to the short-chain dehydrogenases/reductases (SDR) family. Monomer. Present in liver and kidney.

It is found in the cytoplasm. The enzyme catalyses a secondary alcohol + NADP(+) = a ketone + NADPH + H(+). It catalyses the reaction prostaglandin F2alpha + NADP(+) = prostaglandin E2 + NADPH + H(+). The catalysed reaction is prostaglandin E1 + NADP(+) = 15-oxoprostaglandin E1 + NADPH + H(+). It carries out the reaction menadione + NADPH + H(+) = menadiol + NADP(+). The enzyme catalyses prostaglandin D2 + NADP(+) = 15-oxoprostaglandin D2 + NADPH + H(+). It catalyses the reaction prostaglandin E2 + NADP(+) = 15-oxoprostaglandin E2 + NADPH + H(+). The catalysed reaction is prostaglandin F2alpha + NADP(+) = 15-oxoprostaglandin F2alpha + NADPH + H(+). It carries out the reaction daunorubicin + NADPH + H(+) = 13-dihydrodaunorubicin + NADP(+). The enzyme catalyses S-nitrosoglutathione + NADPH + H(+) = S-(hydroxysulfenamide)glutathione + NADP(+). It catalyses the reaction a primary alcohol + NADP(+) = an aldehyde + NADPH + H(+). The catalysed reaction is cortisol + NADPH + H(+) = 20beta-dihydrocortisol + NADP(+). It carries out the reaction corticosterone + NADPH + H(+) = 20beta-dihydrocorticosterone + NADP(+). In terms of biological role, NADPH-dependent reductase with broad substrate specificity. Catalyzes the reduction of a wide variety of carbonyl compounds including quinones, prostaglandins, menadione, plus various xenobiotics. Catalyzes the reduction of the antitumor anthracyclines doxorubicin and daunorubicin to the cardiotoxic compounds doxorubicinol and daunorubicinol. Can convert prostaglandin E to prostaglandin F2-alpha. Can bind glutathione, which explains its higher affinity for glutathione-conjugated substrates. Catalyzes the reduction of S-nitrosoglutathione. In addition, participates in the glucocorticoid metabolism by catalyzing the NADPH-dependent cortisol/corticosterone into 20beta-dihydrocortisol (20b-DHF) or 20beta-corticosterone (20b-DHB), which are weak agonists of NR3C1 and NR3C2 in adipose tissue. This chain is Carbonyl reductase [NADPH] 1, found in Oryctolagus cuniculus (Rabbit).